A 225-amino-acid chain; its full sequence is Tryptophan synthase beta chain (225 aa).

It belongs to the TrpB family. Tetramer of two alpha and two beta chains. Pyridoxal 5'-phosphate serves as cofactor.

The enzyme catalyses (1S,2R)-1-C-(indol-3-yl)glycerol 3-phosphate + L-serine = D-glyceraldehyde 3-phosphate + L-tryptophan + H2O. The protein operates within amino-acid biosynthesis; L-tryptophan biosynthesis; L-tryptophan from chorismate: step 5/5. Functionally, the beta subunit is responsible for the synthesis of L-tryptophan from indole and L-serine. This Buchnera aphidicola subsp. Rhopalosiphum maidis protein is Tryptophan synthase beta chain (trpB).